The chain runs to 199 residues: MSVEPVVVIDGKGHLVGRLASVVAKQLLNGQKIVVVRAEELNISGEFFRNKLKYHDFLRKATAFNKTRGPFHFRAPSRIFYKALRGMVSHKTARGKAALERLKVFEGIPPPYDKKKRVVVPQALRVLRLKPGRKYTTLGKLSTSVGWKYEDVVAKLEAKRKVSSAEYYAKKRAFTKKVASANATAAESDVAKQLAALGY.

S2 is subject to N-acetylserine. K177 is covalently cross-linked (Glycyl lysine isopeptide (Lys-Gly) (interchain with G-Cter in ubiquitin)).

This sequence belongs to the universal ribosomal protein uL13 family. As to quaternary structure, component of the large ribosomal subunit (LSU). Mature yeast ribosomes consist of a small (40S) and a large (60S) subunit. The 40S small subunit contains 1 molecule of ribosomal RNA (18S rRNA) and 33 different proteins (encoded by 57 genes). The large 60S subunit contains 3 rRNA molecules (25S, 5.8S and 5S rRNA) and 46 different proteins (encoded by 81 genes). Post-translationally, N-terminally acetylated by acetyltransferase NatA.

It localises to the cytoplasm. Component of the ribosome, a large ribonucleoprotein complex responsible for the synthesis of proteins in the cell. The small ribosomal subunit (SSU) binds messenger RNAs (mRNAs) and translates the encoded message by selecting cognate aminoacyl-transfer RNA (tRNA) molecules. The large subunit (LSU) contains the ribosomal catalytic site termed the peptidyl transferase center (PTC), which catalyzes the formation of peptide bonds, thereby polymerizing the amino acids delivered by tRNAs into a polypeptide chain. The nascent polypeptides leave the ribosome through a tunnel in the LSU and interact with protein factors that function in enzymatic processing, targeting, and the membrane insertion of nascent chains at the exit of the ribosomal tunnel. The sequence is that of Large ribosomal subunit protein uL13A from Saccharomyces cerevisiae (strain ATCC 204508 / S288c) (Baker's yeast).